Here is a 243-residue protein sequence, read N- to C-terminus: Exosome complex component Rrp41 (243 aa).

This sequence belongs to the RNase PH family. Rrp41 subfamily. In terms of assembly, component of the archaeal exosome complex. Forms a hexameric ring-like arrangement composed of 3 Rrp41-Rrp42 heterodimers. The hexameric ring associates with a trimer of Rrp4 and/or Csl4 subunits.

It localises to the cytoplasm. In terms of biological role, catalytic component of the exosome, which is a complex involved in RNA degradation. Has 3'-&gt;5' exoribonuclease activity. Can also synthesize heteromeric RNA-tails. The polypeptide is Exosome complex component Rrp41 (Sulfurisphaera tokodaii (strain DSM 16993 / JCM 10545 / NBRC 100140 / 7) (Sulfolobus tokodaii)).